The sequence spans 321 residues: MKNWLCQAVRGEPMIELNRIEELFDNQQFSLHELVLNELGVYVFVKNRRGEYLYANPLTLKLFETNAQSLLGKTDHDFFHDDQLSDILAADQQVFETRLSVVHEERAIAKSNGLVRIYRAVKHPILHRVTGEVIGLIGVSTDITDIVELREQLYQLANTDSLTQLCNRRKLWADFRAAFARAKRLRQPLSCISIDIDNFKLINDQFGHDKGDEVLCFLAKLFQSVISDHHFCGRVGGEEFIIVLENTHVETAFHLAEQIRQRFAEHPFFEQNEHIYLCAGVSSLHHGDHDIADIYRRSDQALYKAKRNGRNRCCIYRQSTE.

The PAS domain occupies 28–98 (QFSLHELVLN…AADQQVFETR (71 aa)). Residues 102–155 (VHEERAIAKSNGLVRIYRAVKHPILHRVTGEVIGLIGVSTDITDIVELREQLYQ) enclose the PAC domain. The region spanning 187 to 318 (QPLSCISIDI…GRNRCCIYRQ (132 aa)) is the GGDEF domain. Residues Asp-195, Ile-196, and Glu-238 each coordinate Mg(2+). Glu-238 functions as the Proton acceptor in the catalytic mechanism.

It depends on Mg(2+) as a cofactor.

The enzyme catalyses 2 GTP = 3',3'-c-di-GMP + 2 diphosphate. Its function is as follows. Involved in biofilm formation. Catalyzes the conversion of GTP to c-di-GMP. The protein is Diguanylate cyclase of Vibrio cholerae serotype O1 (strain ATCC 39541 / Classical Ogawa 395 / O395).